The chain runs to 88 residues: UPF0495 protein DEHA2C16280g (88 aa).

Residues 25-47 (YPLFAAMGVAVASGCFFTYRHFA) form a helical membrane-spanning segment.

It belongs to the UPF0495 family.

It localises to the membrane. The polypeptide is UPF0495 protein DEHA2C16280g (Debaryomyces hansenii (strain ATCC 36239 / CBS 767 / BCRC 21394 / JCM 1990 / NBRC 0083 / IGC 2968) (Yeast)).